The sequence spans 408 residues: Histidine--tRNA ligase (408 aa).

Belongs to the class-II aminoacyl-tRNA synthetase family. Homodimer.

Its subcellular location is the cytoplasm. It catalyses the reaction tRNA(His) + L-histidine + ATP = L-histidyl-tRNA(His) + AMP + diphosphate + H(+). The chain is Histidine--tRNA ligase from Campylobacter jejuni subsp. jejuni serotype O:2 (strain ATCC 700819 / NCTC 11168).